The primary structure comprises 255 residues: Pyrroloquinoline-quinone synthase (255 aa).

It belongs to the PqqC family.

The enzyme catalyses 6-(2-amino-2-carboxyethyl)-7,8-dioxo-1,2,3,4,7,8-hexahydroquinoline-2,4-dicarboxylate + 3 O2 = pyrroloquinoline quinone + 2 H2O2 + 2 H2O + H(+). Its pathway is cofactor biosynthesis; pyrroloquinoline quinone biosynthesis. Ring cyclization and eight-electron oxidation of 3a-(2-amino-2-carboxyethyl)-4,5-dioxo-4,5,6,7,8,9-hexahydroquinoline-7,9-dicarboxylic-acid to PQQ. This Cereibacter sphaeroides (strain KD131 / KCTC 12085) (Rhodobacter sphaeroides) protein is Pyrroloquinoline-quinone synthase.